The sequence spans 791 residues: uncharacterized protein (791 aa).

The helical transmembrane segment at 10–30 (LLTITIGAVAVSSILLGGIFY) threads the bilayer. The span at 56–76 (NLDYQKARPSIKDNNLKEIPK) shows a compositional bias: basic and acidic residues. A disordered region spans residues 56 to 175 (NLDYQKARPS…PQPQQIPNQS (120 aa)). Residues 77–97 (PKPQPKPEPQPTPFPDPIPTP) show a composition bias toward pro residues. Residues 98-124 (PKKEELKKPEIKPEEPKKPEIKPEPIP) show a composition bias toward basic and acidic residues. Over residues 125 to 139 (KPKPQPIPQPTPPVE) the composition is skewed to pro residues.

This sequence to U.parvum UU044.

It is found in the membrane. This is an uncharacterized protein from Ureaplasma parvum serovar 3 (strain ATCC 700970).